Reading from the N-terminus, the 173-residue chain is U4/U6.U5 small nuclear ribonucleoprotein component snu23 (173 aa).

A Matrin-type zinc finger spans residues 55–85 (WYCEACNETYKDSLSWLDHLNSTQHLRKTRT). The stretch at 119–149 (SLKERVERYHQELEAKKLRRKQKKVNKEKNS) forms a coiled coil.

As to quaternary structure, component of the 25S U4/U6.U5 tri-snRNP particle, a subcomplex of the spliceosome.

Its subcellular location is the cytoplasm. It is found in the cytoskeleton. The protein resides in the microtubule organizing center. It localises to the spindle pole body. The protein localises to the nucleus. This chain is U4/U6.U5 small nuclear ribonucleoprotein component snu23 (snu23), found in Schizosaccharomyces pombe (strain 972 / ATCC 24843) (Fission yeast).